The following is a 20-amino-acid chain: GMP synthase [glutamine-hydrolyzing] (20 aa).

Residues 1-20 form the GMPS ATP-PPase domain; that stretch reads ALGDQLLSVFVDHTLVDEVA.

Homodimer.

The catalysed reaction is XMP + L-glutamine + ATP + H2O = GMP + L-glutamate + AMP + diphosphate + 2 H(+). The protein operates within purine metabolism; GMP biosynthesis; GMP from XMP (L-Gln route): step 1/1. In terms of biological role, catalyzes the synthesis of GMP from XMP. The polypeptide is GMP synthase [glutamine-hydrolyzing] (guaA) (Fructilactobacillus sanfranciscensis (Lactobacillus sanfranciscensis)).